The sequence spans 387 residues: S-adenosylmethionine synthase (387 aa).

Histidine 17 lines the ATP pocket. Aspartate 19 is a binding site for Mg(2+). Glutamate 45 lines the K(+) pocket. Residues glutamate 58 and glutamine 101 each coordinate L-methionine. Positions glutamine 101 to alanine 111 are flexible loop. Residues aspartate 166–lysine 168, arginine 231–phenylalanine 232, aspartate 240, arginine 246–lysine 247, alanine 263, and lysine 267 contribute to the ATP site. Aspartate 240 contributes to the L-methionine binding site. Lysine 271 provides a ligand contact to L-methionine.

The protein belongs to the AdoMet synthase family. As to quaternary structure, homotetramer; dimer of dimers. Mg(2+) is required as a cofactor. K(+) serves as cofactor.

Its subcellular location is the cytoplasm. The catalysed reaction is L-methionine + ATP + H2O = S-adenosyl-L-methionine + phosphate + diphosphate. It functions in the pathway amino-acid biosynthesis; S-adenosyl-L-methionine biosynthesis; S-adenosyl-L-methionine from L-methionine: step 1/1. In terms of biological role, catalyzes the formation of S-adenosylmethionine (AdoMet) from methionine and ATP. The overall synthetic reaction is composed of two sequential steps, AdoMet formation and the subsequent tripolyphosphate hydrolysis which occurs prior to release of AdoMet from the enzyme. The protein is S-adenosylmethionine synthase of Rhodospirillum centenum (strain ATCC 51521 / SW).